We begin with the raw amino-acid sequence, 338 residues long: Thiosulfate-binding protein (338 aa).

Positions 1-25 (MAVNLLKKNSLALVASLLLAGHVQA) are cleaved as a signal peptide.

This sequence belongs to the prokaryotic sulfate-binding protein family. As to quaternary structure, the complex is composed of two ATP-binding proteins (CysA), two transmembrane proteins (CysT and CysW) and a solute-binding protein (CysP).

The protein resides in the periplasm. Part of the ABC transporter complex CysAWTP (TC 3.A.1.6.1) involved in sulfate/thiosulfate import. This protein specifically binds thiosulfate and is involved in its transmembrane transport. In Escherichia coli (strain K12), this protein is Thiosulfate-binding protein (cysP).